Consider the following 253-residue polypeptide: Diphthine synthase (253 aa).

S-adenosyl-L-methionine contacts are provided by residues D83, L86, 111 to 112, L163, and L205; that span reads SI.

The protein belongs to the diphthine synthase family. As to quaternary structure, homodimer.

It catalyses the reaction 2-[(3S)-amino-3-carboxypropyl]-L-histidyl-[translation elongation factor 2] + 3 S-adenosyl-L-methionine = diphthine-[translation elongation factor 2] + 3 S-adenosyl-L-homocysteine + 3 H(+). It participates in protein modification; peptidyl-diphthamide biosynthesis. Its function is as follows. S-adenosyl-L-methionine-dependent methyltransferase that catalyzes the trimethylation of the amino group of the modified target histidine residue in translation elongation factor 2 (EF-2), to form an intermediate called diphthine. The three successive methylation reactions represent the second step of diphthamide biosynthesis. This Pyrobaculum neutrophilum (strain DSM 2338 / JCM 9278 / NBRC 100436 / V24Sta) (Thermoproteus neutrophilus) protein is Diphthine synthase.